A 313-amino-acid chain; its full sequence is Kazal-type serine protease inhibitor domain-containing protein 1 (313 aa).

A signal peptide spans 1 to 37 (MPRVFTGLPANYAAPTLALSLLLPLLLVVWTQLPVSA). In terms of domain architecture, IGFBP N-terminal spans 56 to 136 (EGEGCAPCRP…EVPEPLCVCR (81 aa)). 7 cysteine pairs are disulfide-bonded: cysteine 60–cysteine 83, cysteine 63–cysteine 85, cysteine 68–cysteine 86, cysteine 74–cysteine 89, cysteine 97–cysteine 115, cysteine 109–cysteine 133, and cysteine 142–cysteine 175. The Kazal-like domain occupies 127-177 (EVPEPLCVCRSQRPLCGSDGRTYAQICRLQEAARARLDANLTVVHPGPCES). 2 N-linked (GlcNAc...) asparagine glycosylation sites follow: asparagine 166 and asparagine 190. Residues 179 to 276 (PQILSQPHNI…GQAEASATLT (98 aa)) enclose the Ig-like C2-type domain. Cysteine 200 and cysteine 260 are joined by a disulfide. An N-linked (GlcNAc...) asparagine glycan is attached at asparagine 284. A disordered region spans residues 290 to 313 (QLQSRSLFPEEEEEAESEELGDYY). The segment covering 298–313 (PEEEEEAESEELGDYY) has biased composition (acidic residues).

In terms of tissue distribution, highly expressed in the spleen. Moderately expressed in the skin, lung and urinary bladder. Weakly expressed in the brain, tongue, esophagus, stomach, large intestine, liver and bone. Expressed in osteoblastic cells during bone regeneration. Expressed in secretory osteoblasts in the tooth.

It localises to the secreted. Its subcellular location is the extracellular space. It is found in the extracellular matrix. Its function is as follows. Involved in the proliferation of osteoblasts during bone formation and bone regeneration. Promotes matrix assembly. This chain is Kazal-type serine protease inhibitor domain-containing protein 1 (Kazald1), found in Mus musculus (Mouse).